We begin with the raw amino-acid sequence, 146 residues long: Hemoglobin subunit beta-2 (146 aa).

The Globin domain occupies 2 to 146; sequence HWTAEEKQLI…VAHALARRYH (145 aa). The heme b site is built by His-63 and His-92.

It belongs to the globin family. As to quaternary structure, heterotetramer of two alpha chains and two beta chains. Red blood cells.

In terms of biological role, involved in oxygen transport from the lung to the various peripheral tissues. The polypeptide is Hemoglobin subunit beta-2 (Iguana iguana (Common iguana)).